The sequence spans 108 residues: UPF0235 protein Rpal_0418 (108 aa).

This sequence belongs to the UPF0235 family.

This Rhodopseudomonas palustris (strain TIE-1) protein is UPF0235 protein Rpal_0418.